Here is a 401-residue protein sequence, read N- to C-terminus: Mannan endo-1,4-beta-mannosidase 3 (401 aa).

Residues M1–A24 form the signal peptide. Residues W84 and N198 each contribute to the substrate site. E199 serves as the catalytic Proton donor. Y277 contacts substrate. Residue E317 is the Nucleophile of the active site. Residue W356 coordinates substrate.

Belongs to the glycosyl hydrolase 5 (cellulase A) family.

Its subcellular location is the secreted. It catalyses the reaction Random hydrolysis of (1-&gt;4)-beta-D-mannosidic linkages in mannans, galactomannans and glucomannans.. This Solanum lycopersicum (Tomato) protein is Mannan endo-1,4-beta-mannosidase 3 (MAN3).